The sequence spans 399 residues: Glutamyl-tRNA reductase (399 aa).

Substrate-binding positions include 45–48, S93, 98–100, and Q104; these read TCNR and EDQ. Catalysis depends on C46, which acts as the Nucleophile. Position 173–178 (173–178) interacts with NADP(+); sequence GAGKMG.

The protein belongs to the glutamyl-tRNA reductase family. In terms of assembly, homodimer.

It carries out the reaction (S)-4-amino-5-oxopentanoate + tRNA(Glu) + NADP(+) = L-glutamyl-tRNA(Glu) + NADPH + H(+). The protein operates within porphyrin-containing compound metabolism; protoporphyrin-IX biosynthesis; 5-aminolevulinate from L-glutamyl-tRNA(Glu): step 1/2. Functionally, catalyzes the NADPH-dependent reduction of glutamyl-tRNA(Glu) to glutamate 1-semialdehyde (GSA). The chain is Glutamyl-tRNA reductase from Methanobrevibacter smithii (strain ATCC 35061 / DSM 861 / OCM 144 / PS).